We begin with the raw amino-acid sequence, 622 residues long: 1-deoxy-D-xylulose-5-phosphate synthase (622 aa).

Thiamine diphosphate-binding positions include His80 and 121–123 (GHS). Asp152 contacts Mg(2+). Residues 153–154 (GA), Asn181, Tyr288, and Glu370 each bind thiamine diphosphate. Asn181 provides a ligand contact to Mg(2+).

It belongs to the transketolase family. DXPS subfamily. As to quaternary structure, homodimer. The cofactor is Mg(2+). It depends on thiamine diphosphate as a cofactor.

It catalyses the reaction D-glyceraldehyde 3-phosphate + pyruvate + H(+) = 1-deoxy-D-xylulose 5-phosphate + CO2. It participates in metabolic intermediate biosynthesis; 1-deoxy-D-xylulose 5-phosphate biosynthesis; 1-deoxy-D-xylulose 5-phosphate from D-glyceraldehyde 3-phosphate and pyruvate: step 1/1. Catalyzes the acyloin condensation reaction between C atoms 2 and 3 of pyruvate and glyceraldehyde 3-phosphate to yield 1-deoxy-D-xylulose-5-phosphate (DXP). The sequence is that of 1-deoxy-D-xylulose-5-phosphate synthase from Shewanella putrefaciens (strain CN-32 / ATCC BAA-453).